Reading from the N-terminus, the 466-residue chain is Asparagine--tRNA ligase (466 aa).

It belongs to the class-II aminoacyl-tRNA synthetase family. As to quaternary structure, homodimer.

The protein localises to the cytoplasm. It carries out the reaction tRNA(Asn) + L-asparagine + ATP = L-asparaginyl-tRNA(Asn) + AMP + diphosphate + H(+). The polypeptide is Asparagine--tRNA ligase (Yersinia enterocolitica serotype O:8 / biotype 1B (strain NCTC 13174 / 8081)).